Here is a 216-residue protein sequence, read N- to C-terminus: Nucleoside triphosphate pyrophosphatase (216 aa).

Asp-82 (proton acceptor) is an active-site residue.

It belongs to the Maf family. A divalent metal cation is required as a cofactor.

Its subcellular location is the cytoplasm. The enzyme catalyses a ribonucleoside 5'-triphosphate + H2O = a ribonucleoside 5'-phosphate + diphosphate + H(+). The catalysed reaction is a 2'-deoxyribonucleoside 5'-triphosphate + H2O = a 2'-deoxyribonucleoside 5'-phosphate + diphosphate + H(+). In terms of biological role, nucleoside triphosphate pyrophosphatase. May have a dual role in cell division arrest and in preventing the incorporation of modified nucleotides into cellular nucleic acids. This Mycobacterium ulcerans (strain Agy99) protein is Nucleoside triphosphate pyrophosphatase.